Reading from the N-terminus, the 112-residue chain is uncharacterized protein (112 aa).

A run of 2 helical transmembrane segments spans residues 44 to 63 and 68 to 90; these read VITG…LHSL and LAAL…KLVH.

It is found in the cell membrane. This is an uncharacterized protein from Archaeoglobus fulgidus (strain ATCC 49558 / DSM 4304 / JCM 9628 / NBRC 100126 / VC-16).